Here is a 111-residue protein sequence, read N- to C-terminus: Nucleoid-associated protein NMC1380 (111 aa).

The protein belongs to the YbaB/EbfC family. In terms of assembly, homodimer.

The protein localises to the cytoplasm. Its subcellular location is the nucleoid. Functionally, binds to DNA and alters its conformation. May be involved in regulation of gene expression, nucleoid organization and DNA protection. This chain is Nucleoid-associated protein NMC1380, found in Neisseria meningitidis serogroup C / serotype 2a (strain ATCC 700532 / DSM 15464 / FAM18).